Consider the following 571-residue polypeptide: Proline--tRNA ligase (571 aa).

Belongs to the class-II aminoacyl-tRNA synthetase family. ProS type 1 subfamily. As to quaternary structure, homodimer.

It is found in the cytoplasm. The enzyme catalyses tRNA(Pro) + L-proline + ATP = L-prolyl-tRNA(Pro) + AMP + diphosphate. Catalyzes the attachment of proline to tRNA(Pro) in a two-step reaction: proline is first activated by ATP to form Pro-AMP and then transferred to the acceptor end of tRNA(Pro). As ProRS can inadvertently accommodate and process non-cognate amino acids such as alanine and cysteine, to avoid such errors it has two additional distinct editing activities against alanine. One activity is designated as 'pretransfer' editing and involves the tRNA(Pro)-independent hydrolysis of activated Ala-AMP. The other activity is designated 'posttransfer' editing and involves deacylation of mischarged Ala-tRNA(Pro). The misacylated Cys-tRNA(Pro) is not edited by ProRS. In Vibrio vulnificus (strain YJ016), this protein is Proline--tRNA ligase.